Here is a 216-residue protein sequence, read N- to C-terminus: Ribonuclease T (216 aa).

One can recognise an Exonuclease domain in the interval 28–202 (VVVDVETGGF…YDTEQTARLF (175 aa)). 4 residues coordinate Mg(2+): Asp31, Glu33, His189, and Asp194. The Proton donor/acceptor role is filled by His189.

It belongs to the RNase T family. Homodimer. Mg(2+) serves as cofactor.

Its function is as follows. Trims short 3' overhangs of a variety of RNA species, leaving a one or two nucleotide 3' overhang. Responsible for the end-turnover of tRNA: specifically removes the terminal AMP residue from uncharged tRNA (tRNA-C-C-A). Also appears to be involved in tRNA biosynthesis. This chain is Ribonuclease T, found in Xanthomonas campestris pv. campestris (strain 8004).